The sequence spans 163 residues: Nucleotide-binding protein CKO_02735 (163 aa).

Belongs to the YajQ family.

Nucleotide-binding protein. The polypeptide is Nucleotide-binding protein CKO_02735 (Citrobacter koseri (strain ATCC BAA-895 / CDC 4225-83 / SGSC4696)).